The sequence spans 246 residues: MNAQREPSGLERLEQALDYRFTQSDLLQLALTHRSAPLDGSKAGEVVATTHNERLEFLGDSVLNLIVSHRLYKRFGEVPEGQLSQWRAMLVNTRSLSEVAKDLELGRYLRMGRGEAKSGGREKYSILGNALEALLGAIYLDGGFEAAERVVDRLFAHQVAGIEPEQQGKDYKTLLQEYLQARGEALPIYAVLSAEGPPHERVFVVSCHPREQLCGHGQGRSKREAEQHAAQQALELLIESENEHHD.

The RNase III domain maps to 10–143 (LERLEQALDY…LLGAIYLDGG (134 aa)). Glu-56 contacts Mg(2+). Asp-60 is an active-site residue. The Mg(2+) site is built by Asn-129 and Glu-132. The active site involves Glu-132. The region spanning 170–239 (DYKTLLQEYL…AQQALELLIE (70 aa)) is the DRBM domain.

It belongs to the ribonuclease III family. In terms of assembly, homodimer. Requires Mg(2+) as cofactor.

The protein resides in the cytoplasm. It carries out the reaction Endonucleolytic cleavage to 5'-phosphomonoester.. Its function is as follows. Digests double-stranded RNA. Involved in the processing of primary rRNA transcript to yield the immediate precursors to the large and small rRNAs (23S and 16S). Processes some mRNAs, and tRNAs when they are encoded in the rRNA operon. Processes pre-crRNA and tracrRNA of type II CRISPR loci if present in the organism. This chain is Ribonuclease 3, found in Magnetococcus marinus (strain ATCC BAA-1437 / JCM 17883 / MC-1).